Here is a 122-residue protein sequence, read N- to C-terminus: Large ribosomal subunit protein uL14 (122 aa).

It belongs to the universal ribosomal protein uL14 family. Part of the 50S ribosomal subunit. Forms a cluster with proteins L3 and L19. In the 70S ribosome, L14 and L19 interact and together make contacts with the 16S rRNA in bridges B5 and B8.

Its function is as follows. Binds to 23S rRNA. Forms part of two intersubunit bridges in the 70S ribosome. This chain is Large ribosomal subunit protein uL14, found in Clostridium kluyveri (strain ATCC 8527 / DSM 555 / NBRC 12016 / NCIMB 10680 / K1).